The chain runs to 865 residues: Alanine--tRNA ligase (865 aa).

Zn(2+) contacts are provided by histidine 554, histidine 558, cysteine 656, and histidine 660.

This sequence belongs to the class-II aminoacyl-tRNA synthetase family. The cofactor is Zn(2+).

Its subcellular location is the cytoplasm. The enzyme catalyses tRNA(Ala) + L-alanine + ATP = L-alanyl-tRNA(Ala) + AMP + diphosphate. Its function is as follows. Catalyzes the attachment of alanine to tRNA(Ala) in a two-step reaction: alanine is first activated by ATP to form Ala-AMP and then transferred to the acceptor end of tRNA(Ala). Also edits incorrectly charged Ser-tRNA(Ala) and Gly-tRNA(Ala) via its editing domain. The polypeptide is Alanine--tRNA ligase (Francisella tularensis subsp. novicida (strain U112)).